The primary structure comprises 354 residues: GDSL esterase/lipase At3g09930 (354 aa).

The first 24 residues, 1-24 (MELPKLLISLFLFSFSSFFLGAES), serve as a signal peptide directing secretion. The active-site Nucleophile is Ser-46. Residues Asn-133, Asn-233, Asn-237, Asn-256, and Asn-300 are each glycosylated (N-linked (GlcNAc...) asparagine). Residues Asp-329 and His-332 contribute to the active site.

Belongs to the 'GDSL' lipolytic enzyme family.

It is found in the secreted. The polypeptide is GDSL esterase/lipase At3g09930 (Arabidopsis thaliana (Mouse-ear cress)).